The primary structure comprises 183 residues: Ion-translocating oxidoreductase complex subunit B (183 aa).

The tract at residues 1-23 is hydrophobic; it reads MLSALLVMAAIAVVLGAALGFAA. The 60-residue stretch at 29–88 folds into the 4Fe-4S domain; it reads EGDPLVDKIDAILPQTQCGQCGYPGCKPYAQAIAQGEADINQCPPGGEEGVRKLADLLGR. The [4Fe-4S] cluster site is built by Cys-46, Cys-49, Cys-54, Cys-71, Cys-113, Cys-116, Cys-119, Cys-123, Cys-143, Cys-146, Cys-149, and Cys-153. 2 4Fe-4S ferredoxin-type domains span residues 104–133 and 135–163; these read AVAY…GAAK and MHTV…MEPV.

This sequence belongs to the 4Fe4S bacterial-type ferredoxin family. RnfB subfamily. In terms of assembly, the complex is composed of six subunits: RnfA, RnfB, RnfC, RnfD, RnfE and RnfG. The cofactor is [4Fe-4S] cluster.

The protein resides in the cell inner membrane. Its function is as follows. Part of a membrane-bound complex that couples electron transfer with translocation of ions across the membrane. The sequence is that of Ion-translocating oxidoreductase complex subunit B from Azoarcus sp. (strain BH72).